The chain runs to 34 residues: Photosystem II reaction center protein M (34 aa).

The chain crosses the membrane as a helical span at residues 5–25 (ILAFIATALFILIPTAFSLIL).

This sequence belongs to the PsbM family. PSII is composed of 1 copy each of membrane proteins PsbA, PsbB, PsbC, PsbD, PsbE, PsbF, PsbH, PsbI, PsbJ, PsbK, PsbL, PsbM, PsbT, PsbX, PsbY, PsbZ, Psb30/Ycf12, at least 3 peripheral proteins of the oxygen-evolving complex and a large number of cofactors. It forms dimeric complexes.

Its subcellular location is the plastid. The protein localises to the chloroplast thylakoid membrane. Its function is as follows. One of the components of the core complex of photosystem II (PSII). PSII is a light-driven water:plastoquinone oxidoreductase that uses light energy to abstract electrons from H(2)O, generating O(2) and a proton gradient subsequently used for ATP formation. It consists of a core antenna complex that captures photons, and an electron transfer chain that converts photonic excitation into a charge separation. This subunit is found at the monomer-monomer interface. The protein is Photosystem II reaction center protein M of Huperzia lucidula (Shining clubmoss).